The sequence spans 115 residues: NADH-ubiquinone oxidoreductase chain 3 (115 aa).

Helical transmembrane passes span leucine 3–phenylalanine 23, phenylalanine 56–leucine 76, and proline 84–tyrosine 104.

It belongs to the complex I subunit 3 family.

Its subcellular location is the mitochondrion membrane. It catalyses the reaction a ubiquinone + NADH + 5 H(+)(in) = a ubiquinol + NAD(+) + 4 H(+)(out). In terms of biological role, core subunit of the mitochondrial membrane respiratory chain NADH dehydrogenase (Complex I) that is believed to belong to the minimal assembly required for catalysis. Complex I functions in the transfer of electrons from NADH to the respiratory chain. The immediate electron acceptor for the enzyme is believed to be ubiquinone. This is NADH-ubiquinone oxidoreductase chain 3 (MT-ND3) from Polypterus ornatipinnis (Ornate bichir).